The following is a 452-amino-acid chain: Phosphoglucosamine mutase (452 aa).

Residue Ser-112 is the Phosphoserine intermediate of the active site. Ser-112, Asp-251, Asp-253, and Asp-255 together coordinate Mg(2+). Ser-112 carries the post-translational modification Phosphoserine.

Belongs to the phosphohexose mutase family. Requires Mg(2+) as cofactor. In terms of processing, activated by phosphorylation.

The enzyme catalyses alpha-D-glucosamine 1-phosphate = D-glucosamine 6-phosphate. Its function is as follows. Catalyzes the conversion of glucosamine-6-phosphate to glucosamine-1-phosphate. The sequence is that of Phosphoglucosamine mutase from Bordetella bronchiseptica (strain ATCC BAA-588 / NCTC 13252 / RB50) (Alcaligenes bronchisepticus).